A 147-amino-acid chain; its full sequence is uncharacterized protein (147 aa).

2 consecutive transmembrane segments (helical) span residues 42 to 62 and 64 to 84; these read WASLICLGLLCVMIMIKSPEP and LILQEILSHTFYLFWMLATAF.

It is found in the cell membrane. This is an uncharacterized protein from Bacillus subtilis (strain 168).